Here is a 163-residue protein sequence, read N- to C-terminus: Transcriptional repressor NrdR (163 aa).

A zinc finger spans residues 3–34 (CPKCNYLKSSVVDSRQAEEGNTIRRRRECENC). The region spanning 49-139 (LLVVKKDGTR…VYRSFKDVDE (91 aa)) is the ATP-cone domain.

The protein belongs to the NrdR family. Requires Zn(2+) as cofactor.

Its function is as follows. Negatively regulates transcription of bacterial ribonucleotide reductase nrd genes and operons by binding to NrdR-boxes. This is Transcriptional repressor NrdR from Streptococcus mutans serotype c (strain ATCC 700610 / UA159).